A 508-amino-acid polypeptide reads, in one-letter code: MRGILVANSTQLPIRPRPDLKVSRNANGADVVIAGLVEGSQGPTVQGLAPRAVKEAEETFGAPLVEVAIRAGGSTKIGSTVVLPWFGNSLVLVGCGAEGFDGESLRKAAGSGARAAADLSHGSSLKVAVDMGTVSAEQVRIAAEGALLGCYKVPTITATSNEPEISTVTIVSNARGAKPELNKARILADAVYTARDWVDAPANLLYPKTFAASVQSWCNNLSDVTVDVLDEKALGRGGFGGILAVGGGSAHSPRLVRVEYAPEGSTTTLALVGKGITFDSGGLNIKTAANMYTMKCDMGGAAAVLAAIGAIARLGLNVRVVAYGCLAENMPSGSGWRPSDVVTMYDGTTVENGNSDAEGRIVMADGLARACEDNPDFIVDISTLTGACMVALGNHTAGVMTSGAQAADTLLDASEAAGEDFWELPITDEVREGLHSDIADVKSSGAREGGAMLAAAFLQRFVTPGIDWAHLDIAGPAYNEASAHDYTPIQGTGFGVRTLVQLAAHMAG.

The Mn(2+) site is built by lysine 274 and aspartate 279. Lysine 286 is an active-site residue. Positions 297, 356, and 358 each coordinate Mn(2+). Residue arginine 360 is part of the active site.

This sequence belongs to the peptidase M17 family. The cofactor is Mn(2+).

It is found in the cytoplasm. The enzyme catalyses Release of an N-terminal amino acid, Xaa-|-Yaa-, in which Xaa is preferably Leu, but may be other amino acids including Pro although not Arg or Lys, and Yaa may be Pro. Amino acid amides and methyl esters are also readily hydrolyzed, but rates on arylamides are exceedingly low.. It catalyses the reaction Release of an N-terminal amino acid, preferentially leucine, but not glutamic or aspartic acids.. In terms of biological role, presumably involved in the processing and regular turnover of intracellular proteins. Catalyzes the removal of unsubstituted N-terminal amino acids from various peptides. This chain is Probable cytosol aminopeptidase, found in Cutibacterium acnes (strain DSM 16379 / KPA171202) (Propionibacterium acnes).